The sequence spans 532 residues: Mitogen-activated protein kinase kinase mkk1 (532 aa).

One can recognise a Protein kinase domain in the interval I235–M505. ATP is bound by residues L241–V249 and K264. D362 (proton acceptor) is an active-site residue.

Belongs to the protein kinase superfamily. STE Ser/Thr protein kinase family. MAP kinase kinase subfamily.

It catalyses the reaction L-seryl-[protein] + ATP = O-phospho-L-seryl-[protein] + ADP + H(+). The enzyme catalyses L-threonyl-[protein] + ATP = O-phospho-L-threonyl-[protein] + ADP + H(+). Functionally, mitogen-activated protein kinase kinase, part of the mkh1-mkk1-spm1 MAPK cascade that regulates regulates vegetative growth, conidial formation, colony surface hydrophobicity, osmotic stress, cell wall integrity maintenance, carbon and nitrogen source utilization, chitin distribution, septa formation, and pathogenicity. This Cytospora mali (Apple Valsa canker fungus) protein is Mitogen-activated protein kinase kinase mkk1.